The primary structure comprises 104 residues: MSTKKKPTITKQELYSLVAADTQLNKALIERIFTSQQKIIQNALKHNQEVIIPPGIKFTVVTVKAKPARQGHNPATGEPIQIKAKPEHKAVKIRALKPVHDMLN.

Belongs to the bacterial histone-like protein family. Homodimer.

It localises to the virion. With respect to regulation, stilbene derivatives SD1 and SD4 disrupt the binding between pA104R and DNA and inhibit the viral replication in primary alveolar macrophages. Its function is as follows. DNA-binding protein that plays a critical role in nucleoid compaction, genome replication and DNA replication and transcription. Binds to both ssDNA and dsDNA with a binding site covering about 15 nucleotides. Displays DNA-supercoiling activity only when associated with the viral DNA topoisomerase 2. The chain is Viral histone-like protein from African swine fever virus (strain Badajoz 1971 Vero-adapted) (Ba71V).